The following is a 152-amino-acid chain: Superoxide dismutase [Cu-Zn] (152 aa).

Histidine 44, histidine 46, and histidine 61 together coordinate Cu cation. Residues histidine 61, histidine 69, histidine 78, and aspartate 81 each coordinate Zn(2+). Histidine 118 is a Cu cation binding site.

Belongs to the Cu-Zn superoxide dismutase family. As to quaternary structure, homodimer. Requires Cu cation as cofactor. It depends on Zn(2+) as a cofactor.

The protein resides in the cytoplasm. It catalyses the reaction 2 superoxide + 2 H(+) = H2O2 + O2. Destroys radicals which are normally produced within the cells and which are toxic to biological systems. This chain is Superoxide dismutase [Cu-Zn], found in Drosophila pseudoobscura pseudoobscura (Fruit fly).